Here is a 185-residue protein sequence, read N- to C-terminus: Guanosine deaminase (185 aa).

Residues 28–142 (DSDHKFLTQA…AAIAIGFDDF (115 aa)) enclose the CMP/dCMP-type deaminase domain. Histidine 80 provides a ligand contact to Zn(2+). The Proton donor role is filled by glutamate 82. Zn(2+) is bound by residues cysteine 110 and cysteine 113.

The protein belongs to the cytidine and deoxycytidylate deaminase family. Expressed in roots, leaves, flowers and siliques.

The protein resides in the cytoplasm. Its subcellular location is the nucleus. It carries out the reaction guanosine + H2O + H(+) = xanthosine + NH4(+). Its function is as follows. Catalyzes the hydrolytic deamination of guanosine, producing xanthosine and ammonia. Deaminates exclusively guanosine and 2'-deoxyguanosine but no other aminated purines, pyrimidines, or pterines. Deamination of guanosine by GSDA is the only source of xanthosine production in Arabidopsis. The chain is Guanosine deaminase from Arabidopsis thaliana (Mouse-ear cress).